Here is a 468-residue protein sequence, read N- to C-terminus: Argininosuccinate lyase (468 aa).

The protein belongs to the lyase 1 family. Argininosuccinate lyase subfamily.

The protein localises to the cytoplasm. The enzyme catalyses 2-(N(omega)-L-arginino)succinate = fumarate + L-arginine. The protein operates within amino-acid biosynthesis; L-arginine biosynthesis; L-arginine from L-ornithine and carbamoyl phosphate: step 3/3. The protein is Argininosuccinate lyase of Sphingopyxis alaskensis (strain DSM 13593 / LMG 18877 / RB2256) (Sphingomonas alaskensis).